The primary structure comprises 55 residues: ATP synthase F(0) complex subunit 8 (55 aa).

Residues 4-24 traverse the membrane as a helical segment; that stretch reads LNPAPWFMIFMFTWAIFLTIL. Residues 34-55 form a disordered region; it reads PNEPSPQGMTTPKTAPWNWPWH.

It belongs to the ATPase protein 8 family. In terms of assembly, component of the ATP synthase complex composed at least of ATP5F1A/subunit alpha, ATP5F1B/subunit beta, ATP5MC1/subunit c (homooctomer), MT-ATP6/subunit a, MT-ATP8/subunit 8, ATP5ME/subunit e, ATP5MF/subunit f, ATP5MG/subunit g, ATP5MK/subunit k, ATP5MJ/subunit j, ATP5F1C/subunit gamma, ATP5F1D/subunit delta, ATP5F1E/subunit epsilon, ATP5PF/subunit F6, ATP5PB/subunit b, ATP5PD/subunit d, ATP5PO/subunit OSCP. ATP synthase complex consists of a soluble F(1) head domain (subunits alpha(3) and beta(3)) - the catalytic core - and a membrane F(0) domain - the membrane proton channel (subunits c, a, 8, e, f, g, k and j). These two domains are linked by a central stalk (subunits gamma, delta, and epsilon) rotating inside the F1 region and a stationary peripheral stalk (subunits F6, b, d, and OSCP).

It is found in the mitochondrion membrane. Its function is as follows. Subunit 8, of the mitochondrial membrane ATP synthase complex (F(1)F(0) ATP synthase or Complex V) that produces ATP from ADP in the presence of a proton gradient across the membrane which is generated by electron transport complexes of the respiratory chain. ATP synthase complex consist of a soluble F(1) head domain - the catalytic core - and a membrane F(1) domain - the membrane proton channel. These two domains are linked by a central stalk rotating inside the F(1) region and a stationary peripheral stalk. During catalysis, ATP synthesis in the catalytic domain of F(1) is coupled via a rotary mechanism of the central stalk subunits to proton translocation. In vivo, can only synthesize ATP although its ATP hydrolase activity can be activated artificially in vitro. Part of the complex F(0) domain. This is ATP synthase F(0) complex subunit 8 from Gadus morhua (Atlantic cod).